Here is a 340-residue protein sequence, read N- to C-terminus: Major histocompatibility complex class I-related gene protein (340 aa).

A signal peptide spans 1–22 (MGELMAFLLPLIIVLMVKHSNS). The interval 23–109 (RTHSLRYFRL…KRLQRHYNHS (87 aa)) is alpha-1. Residues 23–201 (RTHSLRYFRL…EYGKDTLQRT (179 aa)) form an antigen-binding cleft region. At 23–302 (RTHSLRYFRL…QESEAIPLVM (280 aa)) the chain is on the extracellular side. 8-(9H-purin-6-yl)-2-oxa-8-azabicyclo[3.3.1]nona-3,6-diene-4,6-dicarbaldehyde-binding residues include Tyr29 and Arg31. Positions 31, 46, and 65 each coordinate 5-(2-oxoethylideneamino)-6-(D-ribitylamino)uracil. Arg31, Ser46, and Lys65 together coordinate 5-(2-oxopropylideneamino)-6-(D-ribitylamino)uracil. Positions 31, 46, and 65 each coordinate 7-hydroxy-6-methyl-8-(1-D-ribityl)lumazine. The 8-(9H-purin-6-yl)-2-oxa-8-azabicyclo[3.3.1]nona-3,6-diene-4,6-dicarbaldehyde site is built by Lys65 and His80. A 2-amino-4-oxopteridine-6-carbaldehyde-binding site is contributed by Lys65. Residue Lys65 coordinates pyridoxal. Asn107 is a glycosylation site (N-linked (GlcNAc...) asparagine). Positions 110–201 (GSHTYQRMIG…EYGKDTLQRT (92 aa)) are alpha-2. Arg116 lines the 8-(9H-purin-6-yl)-2-oxa-8-azabicyclo[3.3.1]nona-3,6-diene-4,6-dicarbaldehyde pocket. Residues Arg116, Tyr174, and Gln175 each contribute to the 5-(2-oxoethylideneamino)-6-(D-ribitylamino)uracil site. The 5-(2-oxopropylideneamino)-6-(D-ribitylamino)uracil site is built by Arg116, Tyr174, and Gln175. 3 residues coordinate 7-hydroxy-6-methyl-8-(1-D-ribityl)lumazine: Arg116, Tyr174, and Gln175. 2 cysteine pairs are disulfide-bonded: Cys120-Cys183 and Cys222-Cys278. Residues 202–293 (EPPLVRVNRK…GVHMVLQVPQ (92 aa)) form an alpha-3 region. The Ig-like C1-type domain occupies 203–282 (PPLVRVNRKE…SNLYSCHVEH (80 aa)). The interval 294–302 (ESEAIPLVM) is connecting peptide. Residues 303–323 (KAVSGSIVFVIVLTGVGVLVW) traverse the membrane as a helical segment. Residues 324–340 (RRRPREQNGAVYLPTPD) lie on the Cytoplasmic side of the membrane.

Belongs to the MHC class I family. As to quaternary structure, heterotrimer that consists of MR1, B2M and metabolite antigen. Major classes of metabolite ligands presented by MR1 include riboflavin-related antigens, pyrimidines and ribityl lumazines, nucleobase adducts and folate derivatives. Forms reversible covalent Schiff base complexes with microbial pyrimidine-based metabolite, which serves as a molecular switch triggering complete folding, stable association with B2M and translocation of the ternary complex from endoplasmic reticulum to the plasma membrane. Alternatively, forms non-Schiff base complexes with ribityl lumazines. On antigen-presenting cells, the ternary complex interacts with TCR on MR1-restricted T cells. Interacts with TAPBP and TAPBPL chaperones in the endoplasmic reticulum. TAPBP associated or not with MHC class I peptide loading complex binds ligand-free MR1 or MR1-B2M complex, providing for stable MR1 pools ready for metabolite antigen processing. TAPBPL interacts with MR1 in a ligand-independent way; this interaction may stabilize MR1 pool and facilitate ligand loading and dissociation. Structurally, MR1-B2M heterodimer adopts a topology similar to classical MHC class I molecules, with alpha-1 and alpha-2 domains of MR1 forming the antigen-binding cleft composed of two alpha-helices resting on a floor of 7-stranded anti-parallel beta-pleated sheet. MR1-B2M heterodimer (via alpha-helices) interacts with TCR (via CDR domains). In terms of processing, N-glycosylated.

Its subcellular location is the cell membrane. The protein resides in the endoplasmic reticulum membrane. It is found in the golgi apparatus membrane. The protein localises to the early endosome membrane. It localises to the late endosome membrane. Functionally, antigen-presenting molecule specialized in displaying microbial pyrimidine-based metabolites to alpha-beta T cell receptors (TCR) on innate-type mucosal-associated invariant T (MAIT) cells. In complex with B2M preferentially presents riboflavin-derived metabolites to semi-invariant TCRs on MAIT cells, guiding immune surveillance of the microbial metabolome at mucosal epithelial barriers. Signature pyrimidine-based microbial antigens are generated via non-enzymatic condensation of metabolite intermediates of the riboflavin pathway with by-products arising from other metabolic pathways such as glycolysis. Typical potent antigenic metabolites are 5-(2-oxoethylideneamino)-6-D-ribitylaminouracil (5-OE-RU) and 5-(2-oxopropylideneamino)-6-D-ribitylaminouracil (5-OP-RU), products of condensation of 5-amino-6-D-ribityaminouracil (5-A-RU) with glyoxal or methylglyoxal by-products, respectively. May present microbial antigens to various MAIT cell subsets, providing for unique recognition of diverse microbes, including pathogens that do not synthesize riboflavin. Upon antigen recognition, elicits rapid innate-type MAIT cell activation to eliminate pathogenic microbes by directly killing infected cells. During T cell development, drives thymic selection and post-thymic terminal differentiation of MAIT cells in a process dependent on commensal microflora. Acts as an immune sensor of cancer cell metabolome. May present a tumor-specific or -associated metabolite essential for cancer cell survival to a pan-cancer TCR on a non-MAIT CD8-positive T cell clone, triggering T cell-mediated killing of a wide range of cancer cell types. May present tumor-enriched pyridoxal and pyridoxal 5'-phosphate antigens, enabling preferential recognition of cancer cells. Presents nucleobase carbonyl adducts generated during oxidative stress. Captures M3Ade, a nucleobase adduct composed of one adenine modified by a malondialdehyde trimer, for recognition by MR1-restricted T cell clones expressing a polyclonal TCR repertoire. In Pongo pygmaeus (Bornean orangutan), this protein is Major histocompatibility complex class I-related gene protein.